A 269-amino-acid polypeptide reads, in one-letter code: 4-hydroxy-tetrahydrodipicolinate reductase (269 aa).

Residues 10 to 15 (GSSGRM) and Glu-36 each bind NAD(+). Arg-37 provides a ligand contact to NADP(+). Residues 99 to 101 (GTT) and 123 to 126 (APNM) each bind NAD(+). Catalysis depends on His-156, which acts as the Proton donor/acceptor. His-157 serves as a coordination point for (S)-2,3,4,5-tetrahydrodipicolinate. Lys-160 serves as the catalytic Proton donor. 166-167 (GT) is a binding site for (S)-2,3,4,5-tetrahydrodipicolinate.

The protein belongs to the DapB family.

It localises to the cytoplasm. The catalysed reaction is (S)-2,3,4,5-tetrahydrodipicolinate + NAD(+) + H2O = (2S,4S)-4-hydroxy-2,3,4,5-tetrahydrodipicolinate + NADH + H(+). It carries out the reaction (S)-2,3,4,5-tetrahydrodipicolinate + NADP(+) + H2O = (2S,4S)-4-hydroxy-2,3,4,5-tetrahydrodipicolinate + NADPH + H(+). It participates in amino-acid biosynthesis; L-lysine biosynthesis via DAP pathway; (S)-tetrahydrodipicolinate from L-aspartate: step 4/4. Its function is as follows. Catalyzes the conversion of 4-hydroxy-tetrahydrodipicolinate (HTPA) to tetrahydrodipicolinate. This Nitrosospira multiformis (strain ATCC 25196 / NCIMB 11849 / C 71) protein is 4-hydroxy-tetrahydrodipicolinate reductase.